Consider the following 99-residue polypeptide: Large ribosomal subunit protein uL23c (99 aa).

This sequence belongs to the universal ribosomal protein uL23 family. Part of the 50S ribosomal subunit.

It localises to the plastid. Its subcellular location is the chloroplast. Binds to 23S rRNA. This is Large ribosomal subunit protein uL23c (rpl23) from Emiliania huxleyi (Coccolithophore).